Consider the following 194-residue polypeptide: MGARECPARLLLLSLLLLPLGLPVLGAPPRLICDSRVLERYILEAKEGENATMGCAESCSFSENITVPDTKVNFYAWKRMEVQQQAMEVWQGLALLSEAILQGQALLANSSQPSEALQLHVDKAVSGLRSLTSLLRALGAQKEAIPLPDASPSSATPLRTFAVDTLCKLFRNYSNFLRGKLTLYTGEACRRRDR.

Residues 1 to 26 form the signal peptide; that stretch reads MGARECPARLLLLSLLLLPLGLPVLG. Cystine bridges form between cysteine 33/cysteine 189 and cysteine 55/cysteine 59. The N-linked (GlcNAc...) asparagine glycan is linked to asparagine 50. N-linked (GlcNAc...) asparagine glycans are attached at residues asparagine 64, asparagine 109, and asparagine 172.

It belongs to the EPO/TPO family. In terms of tissue distribution, produced by kidney or liver of adult mammals and by liver of fetal or neonatal mammals.

The protein resides in the secreted. Its function is as follows. Hormone involved in the regulation of erythrocyte proliferation and differentiation and the maintenance of a physiological level of circulating erythrocyte mass. Binds to EPOR leading to EPOR dimerization and JAK2 activation thereby activating specific downstream effectors, including STAT1 and STAT3. In Sus scrofa (Pig), this protein is Erythropoietin (EPO).